The following is a 554-amino-acid chain: Developmental and secondary metabolism regulator ve-1 (554 aa).

The Velvet domain occupies 31–230; sequence GRKLWYSLRV…AEQGCRVRIR (200 aa). Positions 45-50 match the Nuclear localization signal motif; that stretch reads LRARAC. The segment covering 166–175 has biased composition (basic and acidic residues); that stretch reads TKEDKDKDPE. Disordered regions lie at residues 166–190, 232–430, and 465–528; these read TKED…SFDF, DVRM…PHRL, and PRAY…VDDK. The segment covering 276–292 has biased composition (polar residues); sequence RSMSGSTERTPYSSISD. Pro residues-rich tracts occupy residues 363 to 372 and 485 to 494; these read SYPPPPPPHQ and LPPPPPPPPQ. The segment at 455-487 is PEST; the sequence is SPSNMAAPPYPRAYSVSNSGGLTSAGGYNQLPP. The segment covering 500–528 has biased composition (basic and acidic residues); it reads RAHDQTFRADPEMRRYQDGARERESVDDK.

This sequence belongs to the velvet family. VeA subfamily. Component of the heterotrimeric velvet complex composed of lae-1, ve-1 and vel-2; Ve-1 acting as a bridging protein between lae-1 and vel-2.

The protein resides in the nucleus. It localises to the cytoplasm. Its function is as follows. Component of the velvet transcription factor complex that controls sexual/asexual developmental ratio in response to light, promoting sexual development in the darkness while stimulating asexual sporulation under illumination. The velvet complex hat acts as a global regulator for secondary metabolite gene expression. In Neurospora crassa (strain ATCC 24698 / 74-OR23-1A / CBS 708.71 / DSM 1257 / FGSC 987), this protein is Developmental and secondary metabolism regulator ve-1.